A 1353-amino-acid polypeptide reads, in one-letter code: Adenylate cyclase type 9 (1353 aa).

Disordered stretches follow at residues Met-1–Ser-27 and Ser-49–Gly-71. The Cytoplasmic portion of the chain corresponds to Met-1–Arg-117. Residues Glu-16–Ser-27 show a composition bias toward polar residues. Residues Ser-49–Arg-66 are compositionally biased toward low complexity. Residues Tyr-118 to Met-138 traverse the membrane as a helical segment. Over Arg-139–Arg-141 the chain is Extracellular. The chain crosses the membrane as a helical span at residues Leu-142–Phe-162. At Thr-163–His-171 the chain is on the cytoplasmic side. A helical transmembrane segment spans residues Tyr-172 to Phe-192. The Extracellular portion of the chain corresponds to Gln-193 to Asp-215. Residue Asn-206 is glycosylated (N-linked (GlcNAc...) asparagine). Residues Thr-216–Tyr-235 traverse the membrane as a helical segment. At Thr-236–Pro-241 the chain is on the cytoplasmic side. The helical transmembrane segment at Leu-242–Phe-259 threads the bilayer. The Extracellular segment spans residues Gly-260–Glu-280. Residues Leu-281–Met-301 form a helical membrane-spanning segment. Residues Ser-302 to Ser-786 lie on the Cytoplasmic side of the membrane. The segment at Gln-349–Ile-375 is disordered. Residues Lys-359 to Ser-374 show a composition bias toward basic residues. A Guanylate cyclase 1 domain is found at Ser-394–Glu-521. Mg(2+)-binding residues include Asp-399, Ile-400, and Asp-443. ATP-binding positions include Asp-399 to Thr-404, Leu-441 to Asp-443, and Arg-487. Residue Ser-610 is modified to Phosphoserine. Positions Glu-642–Lys-684 are disordered. 3 positions are modified to phosphoserine: Ser-688, Ser-691, and Ser-706. Residues Ser-787 to Leu-807 form a helical membrane-spanning segment. Residues Lys-808–Pro-818 are Extracellular-facing. A helical transmembrane segment spans residues Ala-819–Ile-839. Residues Arg-840–Cys-867 are Cytoplasmic-facing. The chain crosses the membrane as a helical span at residues Ile-868–Tyr-888. The Extracellular segment spans residues Glu-889–Asn-891. A helical transmembrane segment spans residues Ile-892–Phe-912. Residues Cys-913–Arg-920 lie on the Cytoplasmic side of the membrane. A helical membrane pass occupies residues Ser-921 to Pro-941. Residues Asp-942–Ala-975 lie on the Extracellular side of the membrane. Asn-955 and Asn-964 each carry an N-linked (GlcNAc...) asparagine glycan. The helical transmembrane segment at Ser-976–Leu-996 threads the bilayer. Over Asn-997–Val-1353 the chain is Cytoplasmic. The region spanning Gly-1058 to Asp-1198 is the Guanylate cyclase 2 domain. ATP is bound by residues Lys-1108, Asp-1185–Trp-1187, Asn-1192–Arg-1196, and Lys-1232. Residues Ser-1257, Ser-1259, Ser-1295, and Ser-1307 each carry the phosphoserine modification. Over residues Ser-1292–Ala-1301 the composition is skewed to polar residues. Residues Ser-1292–Lys-1326 form a disordered region. Residues Lys-1302–Lys-1326 are compositionally biased toward basic and acidic residues.

This sequence belongs to the adenylyl cyclase class-4/guanylyl cyclase family. Mg(2+) is required as a cofactor. Mn(2+) serves as cofactor. Detected in skeletal muscle, pancreas, lung, heart, kidney, liver, brain and placenta. Expressed in multiple cells of the lung, with expression highest in airway smooth muscle.

Its subcellular location is the cell membrane. The catalysed reaction is ATP = 3',5'-cyclic AMP + diphosphate. Insensitive to calcium/calmodulin, forskolin and somatostatin. Stimulated by beta-adrenergic receptor activation. Activity is down-regulated by calcium/calcineurin. Functionally, adenylyl cyclase that catalyzes the formation of the signaling molecule cAMP in response to activation of G protein-coupled receptors. Contributes to signaling cascades activated by CRH (corticotropin-releasing factor), corticosteroids and beta-adrenergic receptors. This Homo sapiens (Human) protein is Adenylate cyclase type 9 (ADCY9).